The chain runs to 455 residues: Glutamyl-tRNA reductase (455 aa).

Substrate-binding positions include 49–52 (TCNR), Ser109, 114–116 (EAQ), and Gln120. Cys50 acts as the Nucleophile in catalysis. 190-195 (GAGAMG) lines the NADP(+) pocket.

Belongs to the glutamyl-tRNA reductase family. Homodimer.

The enzyme catalyses (S)-4-amino-5-oxopentanoate + tRNA(Glu) + NADP(+) = L-glutamyl-tRNA(Glu) + NADPH + H(+). Its pathway is porphyrin-containing compound metabolism; protoporphyrin-IX biosynthesis; 5-aminolevulinate from L-glutamyl-tRNA(Glu): step 1/2. Functionally, catalyzes the NADPH-dependent reduction of glutamyl-tRNA(Glu) to glutamate 1-semialdehyde (GSA). The protein is Glutamyl-tRNA reductase of Salinispora arenicola (strain CNS-205).